A 916-amino-acid polypeptide reads, in one-letter code: Phosphoenolpyruvate carboxylase (916 aa).

Catalysis depends on residues H144 and K578.

This sequence belongs to the PEPCase type 1 family. The cofactor is Mg(2+).

It catalyses the reaction oxaloacetate + phosphate = phosphoenolpyruvate + hydrogencarbonate. In terms of biological role, forms oxaloacetate, a four-carbon dicarboxylic acid source for the tricarboxylic acid cycle. This is Phosphoenolpyruvate carboxylase from Aromatoleum aromaticum (strain DSM 19018 / LMG 30748 / EbN1) (Azoarcus sp. (strain EbN1)).